A 416-amino-acid polypeptide reads, in one-letter code: Glutamyl-tRNA reductase (416 aa).

Substrate contacts are provided by residues 49-52 (TCNR), Ser105, 110-112 (EPQ), and Gln116. The active-site Nucleophile is the Cys50. Position 185 to 190 (185 to 190 (GAGETI)) interacts with NADP(+).

Belongs to the glutamyl-tRNA reductase family. As to quaternary structure, homodimer.

It carries out the reaction (S)-4-amino-5-oxopentanoate + tRNA(Glu) + NADP(+) = L-glutamyl-tRNA(Glu) + NADPH + H(+). Its pathway is porphyrin-containing compound metabolism; protoporphyrin-IX biosynthesis; 5-aminolevulinate from L-glutamyl-tRNA(Glu): step 1/2. In terms of biological role, catalyzes the NADPH-dependent reduction of glutamyl-tRNA(Glu) to glutamate 1-semialdehyde (GSA). In Shewanella frigidimarina (strain NCIMB 400), this protein is Glutamyl-tRNA reductase.